Reading from the N-terminus, the 610-residue chain is Modifier of mdg4 (610 aa).

The interval 1–160 (MADDEQFSLC…QQPRASARYK (160 aa)) is self-association. The interaction with Chi stretch occupies residues 1 to 308 (MADDEQFSLC…EEAEYIDLPM (308 aa)). In terms of domain architecture, BTB spans 32–98 (VDVSLAAEGQ…MYCGEVNVKQ (67 aa)). Disordered stretches follow at residues 115–156 (GLTD…PRAS), 219–259 (VSTN…DSTT), 311–339 (PTKSEPDYSEDHGDAAGDAEGTYVEDDTY), and 386–432 (ESSF…PKPK). The segment covering 122 to 135 (APQPPQESSPPPAA) has biased composition (pro residues). Residues 136 to 156 (PHVQQQQIPAQRVQRQQPRAS) show a composition bias toward low complexity. Residues 222 to 238 (NKRSAQRSSLTPASSSA) show a composition bias toward polar residues. A Phosphoserine modification is found at serine 230. Basic and acidic residues predominate over residues 312–325 (TKSEPDYSEDHGDA). Residues 386-400 (ESSFVDTSGDQGNTE) are compositionally biased toward polar residues. Positions 401–410 (AQAATSASAT) are enriched in low complexity. Residues 422-432 (TKVEDQTPKPK) show a composition bias toward basic and acidic residues. The FLYWCH-type zinc-finger motif lies at 452 to 512 (YASTTKGGVK…VFPYEGEHVH (61 aa)). The segment at 551 to 610 (LEEADDKEDEDFEEFEIQEIDEIELDEPEKTPAKEEEVDPNDFREKIKRRLQKALQNKKK) is interaction with su(Hw). The segment covering 567-577 (IQEIDEIELDE) has biased composition (acidic residues). The segment at 567 to 595 (IQEIDEIELDEPEKTPAKEEEVDPNDFRE) is disordered. A compositionally biased stretch (basic and acidic residues) spans 578-595 (PEKTPAKEEEVDPNDFRE).

As to quaternary structure, can self-associate. Interacts with Chi. Interacts with Top2. Isoform mod2.2: Component of the gypsy chromatin insulator complex, composed of Cp190, mod(mdg4) and su(Hw). The gypsy chromatin insulator complex interacts with Topors via mod(mdg4) and su(Hw). Isoform mod2.2 interacts with Trl/GAGA and interaction with this protein may bypass the repressive effects of the su(Hw) insulator.

The protein resides in the nucleus. Its subcellular location is the chromosome. Functionally, component of the gypsy chromatin insulator complex which is required for the function of the gypsy chromatin insulator and other endogenous chromatin insulators. Chromatin insulators are regulatory elements which establish independent domains of transcriptional activity within eukaryotic genomes. Insulators have two defining properties; they can block the communication between an enhancer and a promoter when placed between them and can also buffer transgenes from position effect variegation (PEV). Insulators are proposed to structure the chromatin fiber into independent domains of differing transcriptional potential by promoting the formation of distinct chromatin loops. This chromatin looping may involve the formation of insulator bodies, where homotypic interactions between individual subunits of the insulator complex could promote the clustering of widely spaced insulators at the nuclear periphery. Within the gypsy insulator complex, this protein may control the nature of the repressive effect of su(Hw): in the absence of mod(mdg4) protein, su(Hw) exerts a bidirectional silencing effect, whereas in the presence of mod(mdg4), the silencing effect is unidirectional. Isoform H is specifically required to maintain the pairing of achiasmate homologs in male meiosis I which is mediated by the rDNA repeats on the achiasmate X-Y bivalents. Isoform H also plays a role in apoptotic regulatory pathways. The protein is Modifier of mdg4 of Drosophila melanogaster (Fruit fly).